A 954-amino-acid polypeptide reads, in one-letter code: Alpha-xylosidase BoGH31A (954 aa).

An N-terminal signal peptide occupies residues 1 to 20 (MIMNMKNIFYCLLPGLLLGA). C21 is lipidated: N-palmitoyl cysteine. C21 carries S-diacylglycerol cysteine lipidation. Positions 227 to 366 (TGQEGALTGT…NPEEQGKQSW (140 aa)) constitute a PA14 domain. Active-site residues include D553 and E556. The Proton donor role is filled by D630.

The protein belongs to the glycosyl hydrolase 31 family.

The protein localises to the cell inner membrane. It catalyses the reaction Hydrolysis of terminal, non-reducing alpha-D-xylose residues with release of alpha-D-xylose.. It functions in the pathway glucan metabolism; xyloglucan degradation. In terms of biological role, catalyzes the liberation of alpha-xylose from the non-reducing terminal glucose of xyloglucan oligosaccharides in xyloglucan degradation, converting the 'X' to 'G' units. The protein is Alpha-xylosidase BoGH31A of Bacteroides ovatus (strain ATCC 8483 / DSM 1896 / JCM 5824 / BCRC 10623 / CCUG 4943 / NCTC 11153).